The chain runs to 390 residues: HIT domain-containing protein DDB_G0272839 (390 aa).

The tract at residues 168–201 is disordered; sequence DNENEKEKEKEMELDNDNTNTESIPPITSKSTST. The span at 184–201 shows a compositional bias: low complexity; it reads DNTNTESIPPITSKSTST. An HIT domain is found at 232–343; sequence YFCNKPESFL…ISNDYNTKYL (112 aa).

The chain is HIT domain-containing protein DDB_G0272839 from Dictyostelium discoideum (Social amoeba).